We begin with the raw amino-acid sequence, 116 residues long: Hydrogenase maturation factor HypA (116 aa).

Position 2 (His-2) interacts with Ni(2+). Positions 73, 76, 90, and 93 each coordinate Zn(2+).

This sequence belongs to the HypA/HybF family.

In terms of biological role, involved in the maturation of [NiFe] hydrogenases. Required for nickel insertion into the metal center of the hydrogenase. The sequence is that of Hydrogenase maturation factor HypA from Escherichia coli O6:H1 (strain CFT073 / ATCC 700928 / UPEC).